Here is a 391-residue protein sequence, read N- to C-terminus: Lysophosphatidylinositol acyltransferase 10 (391 aa).

5 helical membrane-spanning segments follow: residues 10 to 30 (LLGW…NYII), 52 to 72 (AISY…GVRI), 97 to 119 (WMYM…KISL), 323 to 343 (LTSL…IFFV), and 347 to 367 (QLGF…YGGI).

The protein belongs to the 1-acyl-sn-glycerol-3-phosphate acyltransferase family. In terms of tissue distribution, expressed in seam cells, vulval epithelial cells and the major epithelial syncytium hyp7, and in several head neurons including AIY interneurons.

Its subcellular location is the endoplasmic reticulum membrane. It carries out the reaction a 2-acyl-sn-glycero-3-phospho-D-myo-inositol + an acyl-CoA = a 1,2-diacyl-sn-glycero-3-phospho-(1D-myo-inositol) + CoA. The enzyme catalyses a 2-acyl-sn-glycero-3-phospho-D-myo-inositol + octadecanoyl-CoA = 1-octadecanoyl-2-acyl-sn-glycero-3-phospho-1D-myo-inositol + CoA. The protein operates within phospholipid metabolism; phosphatidylinositol metabolism. Acyltransferase required for the fatty acid remodeling of phosphatidylinositol (1,2-diacyl-sn-glycero-3-phosphoinositol or PI). Mediates the conversion of lysophosphatidylinositol (2-acylglycerophosphatidylinositol or LPI) into PI (LPIAT activity). Has preference for saturated and mono-unsaturated fatty acids as acyl donors and sn-2-acyl lysoPI (2-acyl-sn-glycero-3-phospho-D-myo-inositol) as acyl acceptor. Contributes to the asymmetric cell division of epithelial cells. Asymmetric cell division is the fundamental mechanism by which multicellular organisms generate cell diversity. The sequence is that of Lysophosphatidylinositol acyltransferase 10 from Caenorhabditis elegans.